We begin with the raw amino-acid sequence, 389 residues long: STE20-related kinase adapter protein alpha (389 aa).

One can recognise a Protein kinase domain in the interval Tyr-11–Phe-321.

The protein belongs to the protein kinase superfamily. STE Ser/Thr protein kinase family. STE20 subfamily. Component of a trimeric complex composed of STK11/LKB1, STRAD (STRADA or STRADB) and CAB39/MO25 (CAB39/MO25alpha or CAB39L/MO25beta): the complex tethers STK11/LKB1 in the cytoplasm and stimulates its catalytic activity. As to expression, expressed in brain, hypothalamus, heart and skeletal muscle.

It is found in the nucleus. It localises to the cytoplasm. Functionally, pseudokinase which, in complex with CAB39/MO25 (CAB39/MO25alpha or CAB39L/MO25beta), binds to and activates STK11/LKB1. Adopts a closed conformation typical of active protein kinases and binds STK11/LKB1 as a pseudosubstrate, promoting conformational change of STK11/LKB1 in an active conformation. This chain is STE20-related kinase adapter protein alpha (STRADA), found in Gallus gallus (Chicken).